The following is a 91-amino-acid chain: Putative membrane protein insertion efficiency factor (91 aa).

Residues 66-91 (GGVDPVPSCGCHSDKETTPKEKSDNA) are disordered. Residues 77–91 (HSDKETTPKEKSDNA) are compositionally biased toward basic and acidic residues.

It belongs to the UPF0161 family.

The protein localises to the cell inner membrane. In terms of biological role, could be involved in insertion of integral membrane proteins into the membrane. The chain is Putative membrane protein insertion efficiency factor from Hydrogenovibrio crunogenus (strain DSM 25203 / XCL-2) (Thiomicrospira crunogena).